A 1119-amino-acid polypeptide reads, in one-letter code: GATOR2 complex protein MIOS (1119 aa).

The stretch at 3 to 43 (QSSTRKRLIQWSPHNKSSFIVGSNDLRLYNFKFKDKNEKKN) is one WD 1 repeat. Residues 41–60 (KKNENNINNSNQYNQNNQQQ) are disordered. Residues 45–60 (NNINNSNQYNQNNQQQ) show a composition bias toward low complexity. WD repeat units lie at residues 127 to 169 (KTIS…ILTS), 183 to 227 (KHTR…STTL), 281 to 321 (TQSE…SSQS), 324 to 364 (AHQK…DPLI), and 368 to 409 (SNCK…EFSK). The segment at 413-455 (LESTTLSTGGGGSGSNTSNNLNKRSTSNNNNSQDPINTISKPT) is disordered. Low complexity predominate over residues 427–444 (SNTSNNLNKRSTSNNNNS). The stretch at 459 to 499 (HSSDVVSSFSWHPTNECRMLTVSYSGVIDVVSLNENIPISW) is one WD 7 repeat. The interval 601 to 669 (PSISTTTPGG…NNNNNNNNNN (69 aa)) is disordered. The C4-type zinc finger occupies 973–1016 (AKCGFCQNSFAFESISASSIVGRNASSKPNFKAKVPFCPHCKQS). Zn(2+) contacts are provided by Cys-975, Cys-978, Cys-1010, Cys-1013, Cys-1023, Cys-1085, Cys-1088, His-1090, His-1093, His-1096, Cys-1107, Cys-1112, and Cys-1116.

It belongs to the WD repeat mio family. As to quaternary structure, probably part of the GATOR complex.

Its subcellular location is the lysosome membrane. Functionally, as a component of the GATOR complex may function in the amino acid-sensing branch of the TORC1 signaling pathway. The protein is GATOR2 complex protein MIOS of Dictyostelium discoideum (Social amoeba).